Consider the following 534-residue polypeptide: Cytochrome c oxidase subunit 1 (534 aa).

Residues 16 to 36 form a helical membrane-spanning segment; it reads VLYFIFAIFCGMAGTAMSLII. Residues Glu39, Ala42, and Gly44 each contribute to the Ca(2+) site. 6 consecutive transmembrane segments (helical) span residues 57-77, 101-121, 147-167, 182-202, 235-255, and 267-287; these read VLVV…ALIG, ISFW…LVES, AIFA…NFIV, LPLF…SLPV, LFWF…FGII, and VFGE…GFLV. His62 contributes to the Fe(II)-heme a binding site. His241 is a Cu cation binding site. The 1'-histidyl-3'-tyrosine (His-Tyr) cross-link spans 241 to 245; sequence HPEVY. Residue Tyr245 participates in O2 binding. Cu cation contacts are provided by His290 and His291. Helical transmembrane passes span 310 to 330 and 338 to 358; these read MIIA…IYGG and MLYA…GVAL. The Mg(2+) site is built by His368 and Asp369. The next 2 helical transmembrane spans lie at 372-392 and 412-432; these read YVVG…LFAG and IQFW…HFLG. Heme a3 is bound at residue His376. Residue His378 coordinates Fe(II)-heme a. Position 441 (Pro441) interacts with Ca(2+). The chain crosses the membrane as a helical span at residues 452-472; it reads YVASIGSIIAVFSLFLFIYIL.

Belongs to the heme-copper respiratory oxidase family. In terms of assembly, component of the cytochrome c oxidase (complex IV, CIV), a multisubunit enzyme composed of a catalytic core of 3 subunits and several supernumerary subunits. The complex exists as a monomer or a dimer and forms supercomplexes (SCs) in the inner mitochondrial membrane with ubiquinol-cytochrome c oxidoreductase (cytochrome b-c1 complex, complex III, CIII). Heme serves as cofactor. The cofactor is Cu cation.

The protein localises to the mitochondrion inner membrane. The enzyme catalyses 4 Fe(II)-[cytochrome c] + O2 + 8 H(+)(in) = 4 Fe(III)-[cytochrome c] + 2 H2O + 4 H(+)(out). It functions in the pathway energy metabolism; oxidative phosphorylation. In terms of biological role, component of the cytochrome c oxidase, the last enzyme in the mitochondrial electron transport chain which drives oxidative phosphorylation. The respiratory chain contains 3 multisubunit complexes succinate dehydrogenase (complex II, CII), ubiquinol-cytochrome c oxidoreductase (cytochrome b-c1 complex, complex III, CIII) and cytochrome c oxidase (complex IV, CIV), that cooperate to transfer electrons derived from NADH and succinate to molecular oxygen, creating an electrochemical gradient over the inner membrane that drives transmembrane transport and the ATP synthase. Cytochrome c oxidase is the component of the respiratory chain that catalyzes the reduction of oxygen to water. Electrons originating from reduced cytochrome c in the intermembrane space (IMS) are transferred via the dinuclear copper A center (CU(A)) of subunit 2 and heme A of subunit 1 to the active site in subunit 1, a binuclear center (BNC) formed by heme A3 and copper B (CU(B)). The BNC reduces molecular oxygen to 2 water molecules using 4 electrons from cytochrome c in the IMS and 4 protons from the mitochondrial matrix. This Kluyveromyces lactis (strain ATCC 8585 / CBS 2359 / DSM 70799 / NBRC 1267 / NRRL Y-1140 / WM37) (Yeast) protein is Cytochrome c oxidase subunit 1 (COX1).